Consider the following 672-residue polypeptide: uncharacterized protein (672 aa).

A signal peptide spans 1–24 (MKTLKVLKIFIIVYISSVSLESFA). A run of 2 helical transmembrane segments spans residues 226–246 (IIGA…ALNK) and 254–274 (ITLF…LGPL). The segment covering 363–372 (SNGTSGNNKP) has biased composition (polar residues). Positions 363 to 384 (SNGTSGNNKPIPNFDPDGKKDR) are disordered. 4 helical membrane-spanning segments follow: residues 410 to 430 (IILV…LYFI), 436 to 456 (CMVT…MVLF), 469 to 489 (VCIS…LLIT), and 562 to 582 (VVSI…FYYF). Residues 628 to 646 (HGKSSLGDKPDIGNKRKDG) are compositionally biased toward basic and acidic residues. The segment at 628-672 (HGKSSLGDKPDIGNKRKDGAQQGEDAVNSSGGEVADLASGSGGGK) is disordered.

It belongs to the TrbL/VirB6 family.

Its subcellular location is the cell membrane. This is an uncharacterized protein from Rickettsia prowazekii (strain Madrid E).